Reading from the N-terminus, the 287-residue chain is Cuticle collagen 38 (287 aa).

An N-terminal signal peptide occupies residues 1–19 (MSKYLVPVCASISLVAVFG). A disordered region spans residues 95–287 (QGCPPGPPGP…CPCPARAKKH (193 aa)). The span at 98-107 (PPGPPGPPGL) shows a compositional bias: pro residues. Collagen-like domains are found at residues 145–200 (QGPP…GSEG) and 215–273 (GQPG…SIGP). Low complexity predominate over residues 184–205 (TGEQGPQGEPGTEGSEGPTGQD). A compositionally biased stretch (gly residues) spans 206–215 (GTIGGPGLPG). The segment covering 238-252 (DGEQGPQGPQGPDGQ) has biased composition (low complexity).

This sequence belongs to the cuticular collagen family. Collagen polypeptide chains are complexed within the cuticle by disulfide bonds and other types of covalent cross-links.

Its subcellular location is the nucleus. Functionally, probable cuticular collagen-like protein. Nematode cuticles are composed largely of collagen-like proteins. The cuticle functions both as an exoskeleton and as a barrier to protect the worm from its environment. Acts downstream of the Wnt signaling pathway, perhaps in the formation of the adult cuticle. This Caenorhabditis elegans protein is Cuticle collagen 38.